A 481-amino-acid polypeptide reads, in one-letter code: MATLMVQGCTSDAGKSTVVAALCRWFARRGYSVAPFKPQNMALNSAVTVDGGEIGRSTALQALACGVAPHSDMNPVLLKPQTDMGAQVIIRGKVLGNMQALDYHAYKNTASEAVLAAWQDLSSRFDVIIAEGAGSPAEINLRDNDIANMGFAERVDCPVIVVADIDRGGVFAHLTGTLDLLSESEQKRTLGFVINRFRGDLSLLQGGLDWLEERTGKPVFGVLPYLHGLTLDAEDAVDEQGAHDVGAFNVVVPLLPRMSNHNDFDPLRLHPQVNLQFVKMGEAWPSADLIILPGSKATRADLAFLRQQGWDKQIEKHLRYGGKVLGICGGFQMLGERIDDPEGLESDAGSSAGLGWLSMTTRLISGKQLRNVEGRFVAADTLIRGYEIHNGLTQGEALKHPMLVLEGRDDGAMSEDGRVMGCYLHGLFDVPDSCNTILEWAGLKSQRSVDYAVHREQQLDRLADMLEEHLDMTRLKQCMGS.

The region spanning 247-433 (AFNVVVPLLP…LHGLFDVPDS (187 aa)) is the GATase cobBQ-type domain. C328 acts as the Nucleophile in catalysis. H425 is a catalytic residue.

It belongs to the CobB/CobQ family. CobQ subfamily.

It functions in the pathway cofactor biosynthesis; adenosylcobalamin biosynthesis. Its function is as follows. Catalyzes amidations at positions B, D, E, and G on adenosylcobyrinic A,C-diamide. NH(2) groups are provided by glutamine, and one molecule of ATP is hydrogenolyzed for each amidation. The chain is Cobyric acid synthase from Alcanivorax borkumensis (strain ATCC 700651 / DSM 11573 / NCIMB 13689 / SK2).